The primary structure comprises 455 residues: Nuclear receptor subfamily 6 group A member 1-B (455 aa).

The nuclear receptor DNA-binding region spans 38 to 113; that stretch reads ERWCLICGDR…MGMNRKAIRE (76 aa). NR C4-type zinc fingers lie at residues 41-61 and 77-96; these read CLIC…CEGC and CNRD…CQYC. The interval 145 to 173 is disordered; it reads EGSDLSDSWSHGYSNHSSPGNSLSEGGQS. A compositionally biased stretch (polar residues) spans 149–165; it reads LSDSWSHGYSNHSSPGN. Residues 215 to 446 form the NR LBD domain; the sequence is QTHTLTGQIL…YSCTTNQNPW (232 aa).

The protein belongs to the nuclear hormone receptor family. NR6 subfamily. In terms of assembly, homodimer.

It localises to the nucleus. In terms of biological role, probable orphan nuclear receptor. Binds to a response element containing repeats of the motif 5'-AGGTCA-3'. This Danio rerio (Zebrafish) protein is Nuclear receptor subfamily 6 group A member 1-B.